Reading from the N-terminus, the 212-residue chain is MSGTLEKVLCLRNNTIFKQAFSLLRFRTSGEKPIYSVGGILLSISRPYKTKPTHGIGKYKHLIKAEEPKKKKGKVEVRAINLGTDYEYGVLNIHLTAYDMTLAESYAQYVHNLCNSLSIKVEESYAMPTKTIEVLQLQDQGSKMLLDSVLTTHERVVQISGLSATFAEIFLEIIQSSLPEGVRLSVKEHTEEDFKGRFKARPELEELLAKLK.

A mitochondrion-targeting transit peptide spans methionine 1 to threonine 28. N6-succinyllysine is present on lysine 199.

It belongs to the mitochondrion-specific ribosomal protein mL48 family. In terms of assembly, component of the mitochondrial large ribosomal subunit (mt-LSU). Mature mammalian 55S mitochondrial ribosomes consist of a small (28S) and a large (39S) subunit. The 28S small subunit contains a 12S ribosomal RNA (12S mt-rRNA) and 30 different proteins. The 39S large subunit contains a 16S rRNA (16S mt-rRNA), a copy of mitochondrial valine transfer RNA (mt-tRNA(Val)), which plays an integral structural role, and 52 different proteins. mL48 is located at the central protuberance. Interacts with OXA1L.

Its subcellular location is the mitochondrion. The chain is Large ribosomal subunit protein mL48 (MRPL48) from Homo sapiens (Human).